The following is a 30-amino-acid chain: ATP-dependent Clp protease ATP-binding subunit ClpA homolog (30 aa).

Belongs to the ClpA/ClpB family.

Its subcellular location is the plastid. The protein resides in the chloroplast. In terms of biological role, may interact with a ClpP-like protease involved in degradation of denatured proteins in the chloroplast. The sequence is that of ATP-dependent Clp protease ATP-binding subunit ClpA homolog from Pinus pinaster (Maritime pine).